The chain runs to 238 residues: MEYAMKSLSLLYPKSLSRHVSVRTSVVTQQLLSEPSPKAPRARPCRVSTADRSVRKGIMAYSLEDLLLKVRDTLMLADKPFFLVLEEDGTTVETEEYFQALAGDTVFMVLQKGQKWQPPSEQGTRHPLSLSHKPAKKIDVARVTFDLYKLNPQDFIGCLNVKATFYDTYSLSYDLHCCGAKRIMKEAFRWALFSMQATGHVLLGTSCYLQQLLDATEEGQPPKGKASSLIPTCLKILQ.

Positions 1-35 are required for liquid-liquid phase separation (LLPS); the sequence is MEYAMKSLSLLYPKSLSRHVSVRTSVVTQQLLSEP. The CIDE-N domain maps to 41-118; the sequence is RARPCRVSTA…VLQKGQKWQP (78 aa).

This sequence belongs to the CIDE family. In terms of assembly, homodimer. Homooligomer; undergoes liquid-liquid phase separation (LLPS) via its N-terminus, facilitating lipid droplet fusion, occurs at the lipid droplet contact sites. Interacts with CIDEA. Interacts with PLIN1. Interacts with NFAT5; this interaction is direct and retains NFAT5 in the cytoplasm. Interacts with CEBPB. Interacts with isoform CLSTN3beta of CLSTN3; inhibiting the lipid transferase activity of CIDEC. In terms of processing, ubiquitinated and targeted to proteasomal degradation, resulting in a short half-life (about 15 minutes in 3T3-L1 cells). Protein stability depends on triaclyglycerol synthesis, fatty acid availability and lipid droplet formation. In terms of tissue distribution, expressed mainly in adipose tissue, small intestine, heart, colon and stomach and, at lower levels, in brain, kidney and liver.

The protein resides in the lipid droplet. It localises to the endoplasmic reticulum. The protein localises to the nucleus. The enzyme catalyses a triacyl-sn-glycerol(in) = a triacyl-sn-glycerol(out). In terms of biological role, lipid transferase specifically expressed in white adipose tissue, which promotes unilocular lipid droplet formation by mediating lipid droplet fusion. Lipid droplet fusion promotes their enlargement, restricting lipolysis and favoring lipid storage. Localizes on the lipid droplet surface, at focal contact sites between lipid droplets, and mediates atypical lipid droplet fusion by undergoing liquid-liquid phase separation (LLPS) and promoting directional net neutral lipid transfer from the smaller to larger lipid droplets. The transfer direction may be driven by the internal pressure difference between the contacting lipid droplet pair. Its role in neutral lipid transfer and lipid droplet enlargement is activated by the interaction with PLIN1. May also act as a CEBPB coactivator in the white adipose tissue to control the expression of a subset of CEBPB downstream target genes, including SOCS1, SOCS3, TGFB1, TGFBR1, ID2 and XDH. When overexpressed in preadipocytes, induces apoptosis or increases cell susceptibility to apoptosis induced by serum deprivation or TGFB treatment. The protein is Lipid transferase CIDEC of Homo sapiens (Human).